The sequence spans 310 residues: Aminoacyl tRNA synthase complex-interacting multifunctional protein 1 (310 aa).

Alanine 2 carries the N-acetylalanine modification. Residues 6–46 (AVLKRLEQKGAEADQIIEYLKQQVALLKEKAILQATMREEK) form a required for fibroblast proliferation region. An interaction with HSP90B1 region spans residues 54–192 (KLKKEIEELK…APRTVVSGLV (139 aa)). A compositionally biased stretch (polar residues) spans 92-110 (ASESVVQSPSVATTASPAT). The tract at residues 92-147 (ASESVVQSPSVATTASPATKEQIKAGEEKKVKEKTEKKGEKKEKQQSAAASTDSKP) is disordered. A required for endothelial cell death region spans residues 101 to 115 (SVATTASPATKEQIK). Over residues 112–136 (EQIKAGEEKKVKEKTEKKGEKKEKQ) the composition is skewed to basic and acidic residues. The required for endothelial cell migration stretch occupies residues 115–190 (KAGEEKKVKE…EAAPRTVVSG (76 aa)). Phosphoserine is present on serine 138. The tRNA-binding domain occupies 149–250 (DASRLDLRIG…NGSVPGDRIT (102 aa)). An N6-succinyllysine modification is found at lysine 267.

Homodimer. Part of the multisynthetase complex (MSC), a multisubunit complex that groups tRNA ligases for Arg (RARS1), Asp (DARS1), Gln (QARS1), Ile (IARS1), Leu (LARS1), Lys (KARS1), Met (MARS1) the bifunctional ligase for Glu and Pro (EPRS1) and the auxiliary subunits AIMP1/p43, AIMP2/p38 and EEF1E1/p18. Interacts (via N-terminus) with RARS1 (via N-terminus). Part of a complex composed of RARS1, QARS1 and AIMP1. Interacts (via C-terminus) with SMURF2. Interacts (via N-terminus) with HSP90B1/gp96 (via C-terminus). Interacts with PSMA7. Interacts with TARS3. In terms of processing, cleaved by caspase-7 in response to apoptosis to produce EMAP-II. Highly expressed in salivary glands and pancreatic alpha cells in the adult (at protein level). In the embryo, expressed primarily at sites of tissue remodeling such as ganglia, developing bones and teeth.

Its subcellular location is the nucleus. It is found in the cytoplasm. It localises to the cytosol. The protein resides in the secreted. The protein localises to the endoplasmic reticulum. Its subcellular location is the golgi apparatus. Functionally, non-catalytic component of the multisynthase complex. Stimulates the catalytic activity of cytoplasmic arginyl-tRNA synthase. Binds tRNA. Possesses inflammatory cytokine activity. Negatively regulates TGF-beta signaling through stabilization of SMURF2 by binding to SMURF2 and inhibiting its SMAD7-mediated degradation. Involved in glucose homeostasis through induction of glucagon secretion at low glucose levels. Promotes dermal fibroblast proliferation and wound repair. Regulates KDELR1-mediated retention of HSP90B1/gp96 in the endoplasmic reticulum. Plays a role in angiogenesis by inducing endothelial cell migration at low concentrations and endothelian cell apoptosis at high concentrations. Induces maturation of dendritic cells and monocyte cell adhesion. Modulates endothelial cell responses by degrading HIF-1A through interaction with PSMA7. This is Aminoacyl tRNA synthase complex-interacting multifunctional protein 1 (Aimp1) from Mus musculus (Mouse).